The chain runs to 289 residues: 1D-myo-inositol 2-acetamido-2-deoxy-alpha-D-glucopyranoside deacetylase 1 (289 aa).

Zn(2+) is bound by residues H4, D7, and H140.

It belongs to the MshB deacetylase family. The cofactor is Zn(2+).

The enzyme catalyses 1D-myo-inositol 2-acetamido-2-deoxy-alpha-D-glucopyranoside + H2O = 1D-myo-inositol 2-amino-2-deoxy-alpha-D-glucopyranoside + acetate. Catalyzes the deacetylation of 1D-myo-inositol 2-acetamido-2-deoxy-alpha-D-glucopyranoside (GlcNAc-Ins) in the mycothiol biosynthesis pathway. This chain is 1D-myo-inositol 2-acetamido-2-deoxy-alpha-D-glucopyranoside deacetylase 1, found in Frankia alni (strain DSM 45986 / CECT 9034 / ACN14a).